A 164-amino-acid polypeptide reads, in one-letter code: FMN reductase (NADH) RutF (164 aa).

Belongs to the non-flavoprotein flavin reductase family. RutF subfamily.

The catalysed reaction is FMNH2 + NAD(+) = FMN + NADH + 2 H(+). In terms of biological role, catalyzes the reduction of FMN to FMNH2 which is used to reduce pyrimidine by RutA via the Rut pathway. This Enterobacter sp. (strain 638) protein is FMN reductase (NADH) RutF.